The sequence spans 128 residues: Holo-[acyl-carrier-protein] synthase (128 aa).

Positions 7 and 55 each coordinate Mg(2+).

The protein belongs to the P-Pant transferase superfamily. AcpS family. Mg(2+) is required as a cofactor.

The protein resides in the cytoplasm. It catalyses the reaction apo-[ACP] + CoA = holo-[ACP] + adenosine 3',5'-bisphosphate + H(+). Transfers the 4'-phosphopantetheine moiety from coenzyme A to a Ser of acyl-carrier-protein. The polypeptide is Holo-[acyl-carrier-protein] synthase (Moorella thermoacetica (strain ATCC 39073 / JCM 9320)).